The following is a 674-amino-acid chain: UvrABC system protein C (674 aa).

The GIY-YIG domain maps to 16–95; the sequence is TNPGVYRFRD…IKEFKPRFNV (80 aa). Residues 207-242 enclose the UVR domain; it reads KRFTNKLEKQMAAAVARLDYEQAARIRDDITALRKV.

It belongs to the UvrC family. In terms of assembly, interacts with UvrB in an incision complex.

The protein localises to the cytoplasm. Its function is as follows. The UvrABC repair system catalyzes the recognition and processing of DNA lesions. UvrC both incises the 5' and 3' sides of the lesion. The N-terminal half is responsible for the 3' incision and the C-terminal half is responsible for the 5' incision. The polypeptide is UvrABC system protein C (Pseudarthrobacter chlorophenolicus (strain ATCC 700700 / DSM 12829 / CIP 107037 / JCM 12360 / KCTC 9906 / NCIMB 13794 / A6) (Arthrobacter chlorophenolicus)).